The sequence spans 239 residues: Purine nucleoside phosphorylase DeoD-type (239 aa).

Position 5 (His-5) interacts with a purine D-ribonucleoside. Phosphate-binding positions include Gly-21, Arg-25, Arg-44, and Arg-88–Ser-91. A purine D-ribonucleoside-binding positions include Glu-180–Glu-182 and Ser-204–Asp-205. Residue Asp-205 is the Proton donor of the active site.

The protein belongs to the PNP/UDP phosphorylase family. As to quaternary structure, homohexamer; trimer of homodimers.

It carries out the reaction a purine D-ribonucleoside + phosphate = a purine nucleobase + alpha-D-ribose 1-phosphate. The catalysed reaction is a purine 2'-deoxy-D-ribonucleoside + phosphate = a purine nucleobase + 2-deoxy-alpha-D-ribose 1-phosphate. In terms of biological role, catalyzes the reversible phosphorolytic breakdown of the N-glycosidic bond in the beta-(deoxy)ribonucleoside molecules, with the formation of the corresponding free purine bases and pentose-1-phosphate. This Salmonella gallinarum (strain 287/91 / NCTC 13346) protein is Purine nucleoside phosphorylase DeoD-type.